Consider the following 584-residue polypeptide: High-affinity choline transporter 1 (584 aa).

The Extracellular segment spans residues 1–6; it reads MTVHID. The chain crosses the membrane as a helical span at residues 7–27; it reads GIVAIVLFYLLILFVGLWAAW. The Cytoplasmic portion of the chain corresponds to 28-50; sequence KSKNTSMEGAMDRSEAIMIGGRD. The chain crosses the membrane as a helical span at residues 51–71; sequence IGLLVGGFTMTATWVGGGYIN. The Extracellular portion of the chain corresponds to 72–83; sequence GTAEAVYVPGYG. The helical transmembrane segment at 84-104 threads the bilayer; it reads LAWAQAPFGYALSLVIGGLFF. The Cytoplasmic portion of the chain corresponds to 105-127; it reads AKPMRSRGYVTMLDPFQQMYGKR. Residues 128–148 form a helical membrane-spanning segment; sequence MGGLLFIPALLGEIFWSAAIL. The Extracellular portion of the chain corresponds to 149–166; that stretch reads SALGATLSVIVDININVS. Residues 167–187 traverse the membrane as a helical segment; it reads VVVSAVIAVLYTLVGGLYSVA. Over 188 to 193 the chain is Cytoplasmic; sequence YTDVVQ. The chain crosses the membrane as a helical span at residues 194 to 214; sequence LFCIFLGLWISIPFALLNPAV. Over 215 to 239 the chain is Extracellular; sequence TDIIVTANQEVYQEPWVGNIQSKDS. The chain crosses the membrane as a helical span at residues 240-260; sequence LIWIDNFLLLMLGGIPWQVYF. Residues 261 to 276 lie on the Cytoplasmic side of the membrane; it reads QRVLSASSATYAQVLS. Residues 277–297 traverse the membrane as a helical segment; sequence FLAAFGCVLMAIPSVLIGAIG. At 298–319 the chain is on the extracellular side; sequence TSTDWNQTSYGLPGPIGKNETD. N-linked (GlcNAc...) asparagine glycosylation occurs at asparagine 303. The helical transmembrane segment at 320 to 340 threads the bilayer; sequence MILPIVLQHLCPPYISFFGLG. Residues 341-378 are Cytoplasmic-facing; the sequence is AVSAAVMSSADSSILSASSMFARNIYHLAFRQEASDKE. Residues 379 to 399 form a helical membrane-spanning segment; sequence IVWVMRITIFLFGGAATSMAL. Residues 400 to 408 lie on the Extracellular side of the membrane; that stretch reads LAQSIYGLW. A helical membrane pass occupies residues 409-429; the sequence is YLSSDLVYVIIFPQLISVLFV. Over 430–437 the chain is Cytoplasmic; that stretch reads KGTNTYGS. A helical membrane pass occupies residues 438–458; sequence IAGYIIGFLLRISGGEPYLHM. At 459–487 the chain is on the extracellular side; it reads QPFIYYPGCYLDHSFGDDPVYVQRFPFKT. Residues 488–508 traverse the membrane as a helical segment; sequence MAMLFSFLGNTGVSYLVKYLF. At 509 to 584 the chain is on the cytoplasmic side; it reads VSGILPPKLD…NPELSKSGND (76 aa).

The protein belongs to the sodium:solute symporter (SSF) (TC 2.A.21) family. In terms of processing, phosphorylated. As to expression, specific for cholinergic neurons.

It is found in the membrane. In terms of biological role, imports choline from the extracellular space to the neuron with high affinity. Rate-limiting step in acetylcholine synthesis. Sodium ion and chloride ion dependent. This is High-affinity choline transporter 1 (CHT1) from Torpedo marmorata (Marbled electric ray).